The following is a 31-amino-acid chain: Cytochrome b6-f complex subunit 6 (31 aa).

Residues 4 to 24 (ITSYFGFLLAALTITSAIFIG) form a helical membrane-spanning segment.

Belongs to the PetL family. As to quaternary structure, the 4 large subunits of the cytochrome b6-f complex are cytochrome b6, subunit IV (17 kDa polypeptide, PetD), cytochrome f and the Rieske protein, while the 4 small subunits are PetG, PetL, PetM and PetN. The complex functions as a dimer.

Its subcellular location is the plastid. The protein resides in the chloroplast thylakoid membrane. Its function is as follows. Component of the cytochrome b6-f complex, which mediates electron transfer between photosystem II (PSII) and photosystem I (PSI), cyclic electron flow around PSI, and state transitions. PetL is important for photoautotrophic growth as well as for electron transfer efficiency and stability of the cytochrome b6-f complex. The polypeptide is Cytochrome b6-f complex subunit 6 (Ficus carica (Common fig)).